Consider the following 208-residue polypeptide: Protein late bloomer (208 aa).

4 helical membrane-spanning segments follow: residues 10 to 30, 41 to 61, 67 to 87, and 174 to 194; these read IASIVLNAVLGFLAAGAIGWI, FVIAAYIACSLILVFALLGIF, SVVLTATSAVFLLILAILQIV, and FIIVSWVLVAFELICFALAVF.

It belongs to the tetraspanin (TM4SF) family. In terms of tissue distribution, transiently expressed on motor axons, growth cones and terminal arbors.

The protein resides in the membrane. It is found in the synapse. Facilitates synapse formation. In Drosophila melanogaster (Fruit fly), this protein is Protein late bloomer (lbm).